We begin with the raw amino-acid sequence, 235 residues long: Sugar fermentation stimulation protein homolog (235 aa).

It belongs to the SfsA family.

The chain is Sugar fermentation stimulation protein homolog from Pseudomonas paraeruginosa (strain DSM 24068 / PA7) (Pseudomonas aeruginosa (strain PA7)).